The primary structure comprises 579 residues: Proteasome-associated ATPase (579 aa).

The segment at 1–21 (MPRDETPEREHAEQQSRQALE) is disordered. A coiled-coil region spans residues 8–86 (EREHAEQQSR…REEVEKLTQP (79 aa)). Residue 268–273 (GCGKTL) participates in ATP binding. Positions 578–579 (YL) are docks into pockets in the proteasome alpha-ring.

It belongs to the AAA ATPase family. Homohexamer. Assembles into a hexameric ring structure that caps the 20S proteasome core. Strongly interacts with the prokaryotic ubiquitin-like protein Pup through a hydrophobic interface; the interacting region of ARC lies in its N-terminal coiled-coil domain. There is one Pup binding site per ARC hexamer ring. Upon ATP-binding, the C-terminus of ARC interacts with the alpha-rings of the proteasome core, possibly by binding to the intersubunit pockets.

The protein operates within protein degradation; proteasomal Pup-dependent pathway. ATPase which is responsible for recognizing, binding, unfolding and translocation of pupylated proteins into the bacterial 20S proteasome core particle. May be essential for opening the gate of the 20S proteasome via an interaction with its C-terminus, thereby allowing substrate entry and access to the site of proteolysis. Thus, the C-termini of the proteasomal ATPase may function like a 'key in a lock' to induce gate opening and therefore regulate proteolysis. In Acidimicrobium ferrooxidans (strain DSM 10331 / JCM 15462 / NBRC 103882 / ICP), this protein is Proteasome-associated ATPase.